Reading from the N-terminus, the 102-residue chain is Small ribosomal subunit protein uS10 (102 aa).

Belongs to the universal ribosomal protein uS10 family. Part of the 30S ribosomal subunit.

Its function is as follows. Involved in the binding of tRNA to the ribosomes. The chain is Small ribosomal subunit protein uS10 from Bifidobacterium adolescentis (strain ATCC 15703 / DSM 20083 / NCTC 11814 / E194a).